A 411-amino-acid chain; its full sequence is MKQELIERFTRYVKVDTQSDPESNTCPSTQGQWDLARMLVEELKAIGMEEVTVDENGYVMATLPANTDKNVPTIGFLAHLDTAPEFTGTNVNPQIIEQYDGGDIVLNEQQHIILSPKDFPELANYKGHTLITTDGTTLLGADDKAGIAEIMTAMNYLIQHPEIKHGKVRVAFTPDEEIGRGPHKFDVAQFGAQFAYTVDGGPLGELEYESFNAAEAKITIKGKNVHPGTAKGKMINSIKIALEFQQQLPANEAPEHTDGYEGFYHLLSFQGNVEETKLYYIIRDFDREQFEARKAKMKDIAAALAQKYGNDRISIEINDQYYNMREKIEPVHHIVDIAHEAMTNLGIEPKVKPIRGGTDGSQLSYMGLPTPNIFAGGENFHGRYEYISVDTMVKAAEVIVEIIKLFEQKTS.

H79 lines the Zn(2+) pocket. D81 is a catalytic residue. Residue D142 participates in Zn(2+) binding. Residue E176 is the Proton acceptor of the active site. The Zn(2+) site is built by E177, D199, and H381.

This sequence belongs to the peptidase M20B family. Zn(2+) is required as a cofactor.

The protein localises to the cytoplasm. It catalyses the reaction Release of the N-terminal residue from a tripeptide.. Cleaves the N-terminal amino acid of tripeptides. This Geobacillus thermodenitrificans (strain NG80-2) protein is Peptidase T.